A 150-amino-acid chain; its full sequence is Lipoprotein signal peptidase (150 aa).

3 helical membrane-spanning segments follow: residues 5-25 (LSLVIIVVGIIADQVFKNWVV), 59-79 (QQWFFLVLTPIVLIVALWFLW), and 83-103 (GQNWYFAGLTLIIAGALGNFI). Catalysis depends on residues aspartate 113 and aspartate 129. Residues 124-144 (IFNIADILLSVGFVVLFIAIL) form a helical membrane-spanning segment.

The protein belongs to the peptidase A8 family.

It localises to the cell membrane. It catalyses the reaction Release of signal peptides from bacterial membrane prolipoproteins. Hydrolyzes -Xaa-Yaa-Zaa-|-(S,diacylglyceryl)Cys-, in which Xaa is hydrophobic (preferably Leu), and Yaa (Ala or Ser) and Zaa (Gly or Ala) have small, neutral side chains.. It participates in protein modification; lipoprotein biosynthesis (signal peptide cleavage). Its function is as follows. This protein specifically catalyzes the removal of signal peptides from prolipoproteins. The polypeptide is Lipoprotein signal peptidase (Lactococcus lactis subsp. cremoris (strain MG1363)).